Here is a 117-residue protein sequence, read N- to C-terminus: Ribonuclease P protein component 4 (117 aa).

Zn(2+)-binding residues include cysteine 64, cysteine 67, cysteine 93, and cysteine 96.

This sequence belongs to the eukaryotic/archaeal RNase P protein component 4 family. In terms of assembly, consists of a catalytic RNA component and at least 4-5 protein subunits. It depends on Zn(2+) as a cofactor.

Its subcellular location is the cytoplasm. The catalysed reaction is Endonucleolytic cleavage of RNA, removing 5'-extranucleotides from tRNA precursor.. Functionally, part of ribonuclease P, a protein complex that generates mature tRNA molecules by cleaving their 5'-ends. The protein is Ribonuclease P protein component 4 of Pyrococcus abyssi (strain GE5 / Orsay).